We begin with the raw amino-acid sequence, 453 residues long: MSSISDTVKRAREAFNSGKTRSLQFRIQQLEALQRMINENLKSISGALASDLGKNEWTSYYEEVAHVLEELDTTIKELPDWAEDEPVAKTRQTQQDDLYIHSEPLGVVLVIGAWNYPFNLTIQPMVGAVAAGNAVILKPSEVSGHMADLLATLIPQYMDQNLYLVVKGGVPETTELLKERFDHIMYTGSTAVGKIVMAAAAKHLTPVTLELGGKSPCYVDKDCDLDVACRRIAWGKFMNSGQTCVAPDYILCDPSIQNQIVEKLKKSLKDFYGEDAKQSRDYGRIINDRHFQRVKGLIDNQKVAHGGTWDQSSRYIAPTILVDVDPQSPVMQEEIFGPVMPIVCVRSLEEAIQFINQREKPLALYVFSNNEKVIKKMIAETSSGGVTANDVIVHITVPTLPFGGVGNSGMGAYHGKKSFETFSHRRSCLVKSLLNEEAHKARYPPSPAKMPRH.

An N-acetylserine modification is found at Ser-2. At Lys-178 the chain carries N6-acetyllysine. Residue 188 to 193 (GSTAVG) participates in NAD(+) binding. Lys-194 is subject to N6-acetyllysine. Residues Glu-210 and Cys-244 contribute to the active site.

Belongs to the aldehyde dehydrogenase family. As to quaternary structure, homodimer.

The protein localises to the cytoplasm. It carries out the reaction an aldehyde + NAD(+) + H2O = a carboxylate + NADH + 2 H(+). The catalysed reaction is octanal + NAD(+) + H2O = octanoate + NADH + 2 H(+). In terms of biological role, ALDHs play a major role in the detoxification of alcohol-derived acetaldehyde. They are involved in the metabolism of corticosteroids, biogenic amines, neurotransmitters, and lipid peroxidation. Oxidizes medium and long chain aldehydes into non-toxic fatty acids. Preferentially oxidizes aromatic aldehyde substrates. Comprises about 50 percent of corneal epithelial soluble proteins. May play a role in preventing corneal damage caused by ultraviolet light. In Rattus norvegicus (Rat), this protein is Aldehyde dehydrogenase, dimeric NADP-preferring (Aldh3a1).